A 332-amino-acid chain; its full sequence is Ketol-acid reductoisomerase (NAD(+)) (332 aa).

The KARI N-terminal Rossmann domain maps to 1–181; the sequence is MKIYYDQDAD…GATRAGVIQT (181 aa). NAD(+)-binding positions include 24 to 27, S50, and 82 to 85; these read YGSQ and DEKQ. H107 is an active-site residue. G133 is a binding site for NAD(+). A KARI C-terminal knotted domain is found at 182-327; the sequence is TFKEETETDL…ARLRGMMPWL (146 aa). 4 residues coordinate Mg(2+): D190, E194, E226, and E230. S251 serves as a coordination point for substrate.

The protein belongs to the ketol-acid reductoisomerase family. Mg(2+) serves as cofactor.

It carries out the reaction (2R)-2,3-dihydroxy-3-methylbutanoate + NAD(+) = (2S)-2-acetolactate + NADH + H(+). The protein operates within amino-acid biosynthesis; L-isoleucine biosynthesis; L-isoleucine from 2-oxobutanoate: step 2/4. Its pathway is amino-acid biosynthesis; L-valine biosynthesis; L-valine from pyruvate: step 2/4. Its function is as follows. Involved in the biosynthesis of branched-chain amino acids (BCAA). Catalyzes an alkyl-migration followed by a ketol-acid reduction of (S)-2-acetolactate (S2AL) to yield (R)-2,3-dihydroxy-isovalerate. In the isomerase reaction, S2AL is rearranged via a Mg-dependent methyl migration to produce 3-hydroxy-3-methyl-2-ketobutyrate (HMKB). In the reductase reaction, this 2-ketoacid undergoes a metal-dependent reduction by NADH to yield (R)-2,3-dihydroxy-isovalerate. This chain is Ketol-acid reductoisomerase (NAD(+)), found in Thermacetogenium phaeum (strain ATCC BAA-254 / DSM 26808 / PB).